The chain runs to 357 residues: 3-dehydroquinate synthase (357 aa).

Residues 69-74 (DGEKNK), 103-107 (GVIGD), 127-128 (TT), K140, and K149 contribute to the NAD(+) site. The Zn(2+) site is built by E182, H245, and H262.

Belongs to the sugar phosphate cyclases superfamily. Dehydroquinate synthase family. Co(2+) is required as a cofactor. The cofactor is Zn(2+). NAD(+) serves as cofactor.

The protein localises to the cytoplasm. It carries out the reaction 7-phospho-2-dehydro-3-deoxy-D-arabino-heptonate = 3-dehydroquinate + phosphate. Its pathway is metabolic intermediate biosynthesis; chorismate biosynthesis; chorismate from D-erythrose 4-phosphate and phosphoenolpyruvate: step 2/7. Catalyzes the conversion of 3-deoxy-D-arabino-heptulosonate 7-phosphate (DAHP) to dehydroquinate (DHQ). This chain is 3-dehydroquinate synthase, found in Shewanella denitrificans (strain OS217 / ATCC BAA-1090 / DSM 15013).